The chain runs to 1462 residues: Trifunctional nucleotide phosphoesterase protein YfkN (1462 aa).

Residues 1–35 (MRIQKRRTHVENILRILLPPIMILSLILPTPPIHA) form the signal peptide. Residues 36–623 (EESAAPQVHL…GTNLTFESSL (588 aa)) are 2',3'-cyclic nucleotide 2'-phosphodiesterase/3'-nucleotidase. A divalent metal cation is bound by residues Asp-52, His-54, Asp-97, Asn-141, His-249, His-282, and His-284. A ribonucleoside 3'-phosphate contacts are provided by residues Tyr-458 and 561 to 567 (YRASGGG). The interval 624 to 1427 (LAKPFADKAD…GPAGGLLPDT (804 aa)) is 5'-nucleotidase. 7 residues coordinate a divalent metal cation: Asp-676, His-678, Asp-708, Asn-740, His-872, His-895, and His-897. Residues Phe-1047 and 1127-1133 (FVGAGGD) contribute to the a ribonucleoside 5'-phosphate site. A disordered region spans residues 1350-1422 (ILNSGSNNKP…GSGTDGPAGG (73 aa)). The span at 1405 to 1421 (GSGGNGSGGSGTDGPAG) shows a compositional bias: gly residues. The LPXTG sorting signal motif lies at 1424-1428 (LPDTA). Residue Thr-1427 is modified to Pentaglycyl murein peptidoglycan amidated threonine. Positions 1428–1462 (ATSMYSILLAGFLISALGTAMYLHQRRKQNRANQA) are cleaved as a propeptide — removed by sortase.

Belongs to the 5'-nucleotidase family. The cofactor is a divalent metal cation.

Its subcellular location is the secreted. The protein localises to the cell wall. It catalyses the reaction a nucleoside 2',3'-cyclic phosphate + H2O = a nucleoside 3'-phosphate + H(+). The catalysed reaction is a ribonucleoside 3'-phosphate + H2O = a ribonucleoside + phosphate. The enzyme catalyses a ribonucleoside 5'-phosphate + H2O = a ribonucleoside + phosphate. Catalyzes the release of inorganic phosphate from 2',3'-cyclic nucleotides through consecutive 2',3'-phosphodiesterase and 3'- (or 2') nucleotidase activities. Also possesses a 5'-nucleotidase activity. Does not catalyze the release of inorganic phosphate from 3',5'-cyclic nucleotides. Probably plays a role in the cellular reprocessing of nucleotides present in the medium, under conditions of phosphate shortage. The polypeptide is Trifunctional nucleotide phosphoesterase protein YfkN (yfkN) (Bacillus subtilis (strain 168)).